We begin with the raw amino-acid sequence, 708 residues long: Radial spoke head protein 6 homolog A (708 aa).

4 disordered regions span residues 1 to 94 (MGEP…GYTP), 376 to 407 (ETHG…IIPK), 495 to 514 (EEEG…FEEN), and 663 to 708 (GPEI…DLED). The span at 10 to 32 (PSQTRRASQGSERARSQEYSQPL) shows a compositional bias: polar residues. A compositionally biased stretch (low complexity) spans 47 to 56 (RGSRSSQGSQ). A compositionally biased stretch (acidic residues) spans 495–504 (EEEGDEEEEG). Residues 680-690 (LKAAQEQALAA) are compositionally biased toward low complexity. Over residues 691 to 708 (AEEEEEDEEEEEDEDLED) the composition is skewed to acidic residues.

It belongs to the flagellar radial spoke RSP4/6 family. Component of the axonemal radial spoke 1 (RS1) and 2 (RS2) complexes, at least composed of spoke head proteins RSPH1, RSPH3, RSPH9 and the cilia-specific component RSPH4A or sperm-specific component RSPH6A, spoke stalk proteins RSPH14, DNAJB13, DYDC1, ROPN1L and NME5, and the RS1 complex-specific anchor protein IQUB. Interacts with RSPH1. Interacts with RSPH3B. Interacts with RSPH4A. Interacts with RSPH9. Interacts with RSPH10B. Post-translationally, phosphorylated by PKA. Phosphorylation increases in capacitated sperm. In terms of tissue distribution, expressed in sperm and testis (at protein level).

The protein localises to the cytoplasm. Its subcellular location is the cytoskeleton. It is found in the flagellum axoneme. Its function is as follows. Functions as part of radial spoke complexes in the axoneme of sperm flagella that play an important part in motility. The triple radial spokes (RS1, RS2 and RS3) are required to modulate beating of the sperm flagellum. The protein is Radial spoke head protein 6 homolog A of Mus musculus (Mouse).